Here is a 325-residue protein sequence, read N- to C-terminus: Aspartate carbamoyltransferase catalytic subunit (325 aa).

2 residues coordinate carbamoyl phosphate: R55 and T56. K83 serves as a coordination point for L-aspartate. R105, H135, and Q138 together coordinate carbamoyl phosphate. L-aspartate contacts are provided by R176 and R230. Carbamoyl phosphate is bound by residues G271 and P272.

The protein belongs to the aspartate/ornithine carbamoyltransferase superfamily. ATCase family. In terms of assembly, heterododecamer (2C3:3R2) of six catalytic PyrB chains organized as two trimers (C3), and six regulatory PyrI chains organized as three dimers (R2).

The catalysed reaction is carbamoyl phosphate + L-aspartate = N-carbamoyl-L-aspartate + phosphate + H(+). It participates in pyrimidine metabolism; UMP biosynthesis via de novo pathway; (S)-dihydroorotate from bicarbonate: step 2/3. Catalyzes the condensation of carbamoyl phosphate and aspartate to form carbamoyl aspartate and inorganic phosphate, the committed step in the de novo pyrimidine nucleotide biosynthesis pathway. This is Aspartate carbamoyltransferase catalytic subunit from Streptomyces avermitilis (strain ATCC 31267 / DSM 46492 / JCM 5070 / NBRC 14893 / NCIMB 12804 / NRRL 8165 / MA-4680).